We begin with the raw amino-acid sequence, 203 residues long: Cardiotrophin-1 (203 aa).

This sequence belongs to the IL-6 superfamily. In terms of tissue distribution, expressed in the ventricle and atrium of adult rats. Also detected in the lung, kidney, liver, skeletal muscle, stomach and urinary bladder. Not detected in brain, colon, testis, spleen or thymus. Overexpressed in the ventricles in the case of hypertension and hypertrophy.

It is found in the secreted. Functionally, induces cardiac myocyte hypertrophy in vitro. Binds to and activates the ILST/gp130 receptor. The polypeptide is Cardiotrophin-1 (Ctf1) (Rattus norvegicus (Rat)).